A 454-amino-acid polypeptide reads, in one-letter code: tRNA modification GTPase MnmE (454 aa).

(6S)-5-formyl-5,6,7,8-tetrahydrofolate is bound by residues R23, E80, and K120. The TrmE-type G domain maps to 216–377 (GMKVVIAGRP…LRNHLKQSMG (162 aa)). N226 lines the K(+) pocket. GTP-binding positions include 226 to 231 (NAGKSS), 245 to 251 (TDIAGTT), 270 to 273 (DTAG), 335 to 338 (NKAD), and 358 to 360 (SAR). S230 contacts Mg(2+). Positions 245, 247, and 250 each coordinate K(+). A Mg(2+)-binding site is contributed by T251. K454 lines the (6S)-5-formyl-5,6,7,8-tetrahydrofolate pocket.

This sequence belongs to the TRAFAC class TrmE-Era-EngA-EngB-Septin-like GTPase superfamily. TrmE GTPase family. Homodimer. Heterotetramer of two MnmE and two MnmG subunits. Requires K(+) as cofactor.

It is found in the cytoplasm. Its function is as follows. Exhibits a very high intrinsic GTPase hydrolysis rate. Involved in the addition of a carboxymethylaminomethyl (cmnm) group at the wobble position (U34) of certain tRNAs, forming tRNA-cmnm(5)s(2)U34. The chain is tRNA modification GTPase MnmE from Salmonella choleraesuis (strain SC-B67).